A 196-amino-acid polypeptide reads, in one-letter code: MNEAVSPGALSTLFTDARTHNGWRETPVSDETLREIYALMKWGPTSANCSPARIVFIRTAEGKERLRPALSSGNLQKTLTAPVTAIVAWDSEFYERLPQLFPHGDARSWFTSSPQLAEETAFRNSSMQAAYLIVACRALGLDTGPMSGFDRQHVDDAFFAGSTLKSNLLINIGYGDSSKLFARLPRLSFEEACGLL.

The protein belongs to the nitroreductase family. HadB/RutE subfamily. FMN is required as a cofactor.

The catalysed reaction is 3-hydroxypropanoate + NADP(+) = 3-oxopropanoate + NADPH + H(+). Its function is as follows. May reduce toxic product malonic semialdehyde to 3-hydroxypropionic acid, which is excreted. This Escherichia coli O8 (strain IAI1) protein is Probable malonic semialdehyde reductase RutE.